Consider the following 317-residue polypeptide: MTTQLDSLRNMTVVVADTGDIEAIKKYQPEDATTNPSLILSASALPQYASLIDEAIAYAKSKSNCSKQQLIDAEDKLAVNIGLEILKIVPGRISTEVDARLSYDTQATIEKAKKLIALYNEAGISNDRILIKIASTWQGIRAAEELEKQGINCNLTLLFSEAQARACAEAGVYLISPFVGRILDWYKANSDKKDYAPAEDPGVISVTKIYNYYKQHGYNTIVMGASFRNVGEITELAGCDRLTIAPALLKELQENNAPLERKLSYTGEVKAKPQPLTEAEFYWQHNSDAMAVEKLADGIRKFAADQEKLEAMLLTKF.

Lysine 132 serves as the catalytic Schiff-base intermediate with substrate.

Belongs to the transaldolase family. Type 1 subfamily. In terms of assembly, homodimer.

It localises to the cytoplasm. It carries out the reaction D-sedoheptulose 7-phosphate + D-glyceraldehyde 3-phosphate = D-erythrose 4-phosphate + beta-D-fructose 6-phosphate. It functions in the pathway carbohydrate degradation; pentose phosphate pathway; D-glyceraldehyde 3-phosphate and beta-D-fructose 6-phosphate from D-ribose 5-phosphate and D-xylulose 5-phosphate (non-oxidative stage): step 2/3. In terms of biological role, transaldolase is important for the balance of metabolites in the pentose-phosphate pathway. The sequence is that of Transaldolase A (talA) from Pasteurella multocida (strain Pm70).